The sequence spans 182 residues: Ribosome maturation factor RimM (182 aa).

The PRC barrel domain maps to E103 to F182.

Belongs to the RimM family. As to quaternary structure, binds ribosomal protein uS19.

The protein resides in the cytoplasm. Functionally, an accessory protein needed during the final step in the assembly of 30S ribosomal subunit, possibly for assembly of the head region. Essential for efficient processing of 16S rRNA. May be needed both before and after RbfA during the maturation of 16S rRNA. It has affinity for free ribosomal 30S subunits but not for 70S ribosomes. The chain is Ribosome maturation factor RimM from Yersinia enterocolitica serotype O:8 / biotype 1B (strain NCTC 13174 / 8081).